We begin with the raw amino-acid sequence, 357 residues long: DNA replication and repair protein RecF (357 aa).

30–37 is an ATP binding site; it reads GANGSGKT.

This sequence belongs to the RecF family.

The protein localises to the cytoplasm. Its function is as follows. The RecF protein is involved in DNA metabolism; it is required for DNA replication and normal SOS inducibility. RecF binds preferentially to single-stranded, linear DNA. It also seems to bind ATP. The sequence is that of DNA replication and repair protein RecF from Salmonella paratyphi B (strain ATCC BAA-1250 / SPB7).